The primary structure comprises 555 residues: Perforin-1 (555 aa).

Residues 1-21 form the signal peptide; it reads MAARLLLLGILLLLLPLPVPA. 3 disulfides stabilise this stretch: Cys23–Cys76, Cys31–Cys73, and Cys102–Cys176. An MACPF domain is found at 27-375; it reads ARSECKRSHK…QYLTDRARWR (349 aa). A beta stranded membrane pass occupies residues 129–149; the sequence is WKVGLDVTPKPTSNVHVSVAG. N-linked (GlcNAc...) asparagine glycosylation is present at Asn205. 4 disulfide bridges follow: Cys242-Cys408, Cys377-Cys393, Cys381-Cys395, and Cys397-Cys407. A beta stranded membrane pass occupies residues 257–279; it reads CLTVEAQVNIGIHGSISAEAKAC. One can recognise an EGF-like domain in the interval 376-408; the sequence is DCSRPCPPGRQKSPRDPCQCVCHGSAVTTQDCC. One can recognise a C2 domain in the interval 397–519; that stretch reads CHGSAVTTQD…CNLNHGHLKF (123 aa). Positions 429, 430, 433, 434, 436, 484, 486, 490, 491, and 492 each coordinate Ca(2+). Cystine bridges form between Cys497–Cys510 and Cys525–Cys534. A glycan (N-linked (GlcNAc...) asparagine) is linked at Asn549.

This sequence belongs to the complement C6/C7/C8/C9 family. Monomer, as soluble protein. Homooligomer; homooligomerizes to form a pore-forming ring. Ca(2+) serves as cofactor. Post-translationally, N-glycosylated.

Its subcellular location is the cytolytic granule. The protein resides in the secreted. It localises to the cell membrane. It is found in the endosome lumen. Its function is as follows. Pore-forming protein that plays a key role in granzyme-mediated programmed cell death, and in defense against virus-infected or neoplastic cells. Plays an important role in killing other cells that are recognized as non-self by the immune system, e.g. in transplant rejection or some forms of autoimmune disease. Can insert into the membrane of target cells in its calcium-bound form, oligomerize and form large pores. Promotes cytolysis and apoptosis of target cells by mediating the passage and uptake of cytotoxic granzymes. Facilitates the delivery of cationic cargo protein, while anionic or neural proteins are not delivered efficiently. Perforin pores allow the release of mature caspase-7 (CASP7) into the extracellular milieu. This chain is Perforin-1 (PRF1), found in Homo sapiens (Human).